A 513-amino-acid polypeptide reads, in one-letter code: Bifunctional purine biosynthesis protein PurH (513 aa).

The MGS-like domain maps to 1–146; sequence MPRFALLSVS…KNHAHLTILT (146 aa).

This sequence belongs to the PurH family.

It carries out the reaction (6R)-10-formyltetrahydrofolate + 5-amino-1-(5-phospho-beta-D-ribosyl)imidazole-4-carboxamide = 5-formamido-1-(5-phospho-D-ribosyl)imidazole-4-carboxamide + (6S)-5,6,7,8-tetrahydrofolate. It catalyses the reaction IMP + H2O = 5-formamido-1-(5-phospho-D-ribosyl)imidazole-4-carboxamide. It participates in purine metabolism; IMP biosynthesis via de novo pathway; 5-formamido-1-(5-phospho-D-ribosyl)imidazole-4-carboxamide from 5-amino-1-(5-phospho-D-ribosyl)imidazole-4-carboxamide (10-formyl THF route): step 1/1. The protein operates within purine metabolism; IMP biosynthesis via de novo pathway; IMP from 5-formamido-1-(5-phospho-D-ribosyl)imidazole-4-carboxamide: step 1/1. In Synechococcus elongatus (strain ATCC 33912 / PCC 7942 / FACHB-805) (Anacystis nidulans R2), this protein is Bifunctional purine biosynthesis protein PurH.